Reading from the N-terminus, the 243-residue chain is CTD nuclear envelope phosphatase 1 homolog (243 aa).

Residues 11–27 traverse the membrane as a helical segment; sequence ALLLLLSKVWTCICFMF. Residues 56 to 223 enclose the FCP1 homology domain; sequence SLVQRKTLVL…LSLLPMLDAL (168 aa).

This sequence belongs to the dullard family.

It is found in the membrane. The catalysed reaction is O-phospho-L-seryl-[protein] + H2O = L-seryl-[protein] + phosphate. It catalyses the reaction O-phospho-L-threonyl-[protein] + H2O = L-threonyl-[protein] + phosphate. Its function is as follows. Serine/threonine protein phosphatase that may dephosphorylate and activate lipin-like phosphatases. Lipins are phosphatidate phosphatases that catalyze the conversion of phosphatidic acid to diacylglycerol and control the metabolism of fatty acids at different levels. May indirectly modulate the lipid composition of nuclear and/or endoplasmic reticulum membranes and be required for proper nuclear membrane morphology and/or dynamics. May also indirectly regulate the production of lipid droplets and triacylglycerol. The chain is CTD nuclear envelope phosphatase 1 homolog (l(1)G0269) from Drosophila pseudoobscura pseudoobscura (Fruit fly).